Reading from the N-terminus, the 380-residue chain is Cytochrome b (380 aa).

Transmembrane regions (helical) follow at residues 33–53 (FGSL…FLAM), 77–98 (WLIR…YLHI), 113–133 (WNIG…GYVL), and 178–198 (FFAF…IHLI). Heme b-binding residues include His83 and His97. Heme b-binding residues include His182 and His196. Residue His201 participates in a ubiquinone binding. 4 helical membrane passes run 226-246 (YKDL…ALFS), 288-308 (LGGV…PVLH), 320-340 (FSQF…WIGG), and 347-367 (FIII…ILVP).

The protein belongs to the cytochrome b family. The cytochrome bc1 complex contains 3 respiratory subunits (MT-CYB, CYC1 and UQCRFS1), 2 core proteins (UQCRC1 and UQCRC2) and probably 6 low-molecular weight proteins. The cofactor is heme b.

It is found in the mitochondrion inner membrane. Its function is as follows. Component of the ubiquinol-cytochrome c reductase complex (complex III or cytochrome b-c1 complex) that is part of the mitochondrial respiratory chain. The b-c1 complex mediates electron transfer from ubiquinol to cytochrome c. Contributes to the generation of a proton gradient across the mitochondrial membrane that is then used for ATP synthesis. The polypeptide is Cytochrome b (mt-cyb) (Astronotus ocellatus (Oscar)).